The sequence spans 625 residues: Probable potassium transport system protein Kup 2 (625 aa).

12 helical membrane-spanning segments follow: residues 15 to 35 (LSFA…LYAF), 52 to 72 (ILSL…LVIV), 98 to 118 (GGWL…DGIL), 134 to 154 (LSPN…FFLF), 164 to 184 (IGIY…VLGF), 203 to 223 (IYFF…VFLV), 246 to 266 (WFAV…AFVL), 284 to 304 (FLPV…QAII), 336 to 356 (VYLP…VVIF), 365 to 385 (AYGI…GIIA), 394 to 414 (FKVM…AGNI), and 417 to 437 (LLTG…VMYT).

This sequence belongs to the HAK/KUP transporter (TC 2.A.72) family.

The protein localises to the cell inner membrane. It carries out the reaction K(+)(in) + H(+)(in) = K(+)(out) + H(+)(out). Its function is as follows. Transport of potassium into the cell. Likely operates as a K(+):H(+) symporter. This is Probable potassium transport system protein Kup 2 from Legionella pneumophila subsp. pneumophila (strain Philadelphia 1 / ATCC 33152 / DSM 7513).